A 469-amino-acid chain; its full sequence is MAEEREPELYLKWKHCETPGVKTLCNLKHCETPGVKTLCNLKKLLNRLQKDHREDVYLYISGHLNPNKLYQPPETILQHWPNAHRPKGERASEVGEPPAGKVARMKEALAHFTIHTALVPSEAQDTPLFRYLNPQASLSHTSEEDFLPVEAVREGKEEKKGGPPGRGPPGWRRREELRLPDLKVLCYQEAGSRGTRDRHHYVSSYLAGATSADRYRMFLRFQKEVLAKQDLLKNDFTGSKAAAGHERKLQQELQKICTCSPQQFNRLHVFGKVFEDICNSSLIFGDLLKKVKDEYELYMATLLESQPAAQYEALLAQLKALGQRPVKTADMDLAREELRMLVTATKAALEQNDRLRSELEMEVALLQSAKERSESSEKHIIDENRLTLTEKVEKKRCEILSKWDEIQALEKEIKTTLVHTGISDITENRIKSIEHEAIQLETENMILKKKIKGPLEIYQGICKIRGNRR.

Positions 152-161 (VREGKEEKKG) are enriched in basic and acidic residues. The tract at residues 152–174 (VREGKEEKKGGPPGRGPPGWRRR) is disordered. Coiled coils occupy residues 346–375 (KAAL…RSES) and 423–453 (SDIT…KIKG).

This is an uncharacterized protein from Homo sapiens (Human).